The following is an 88-amino-acid chain: Small ribosomal subunit protein uS15 (88 aa).

It belongs to the universal ribosomal protein uS15 family. Part of the 30S ribosomal subunit. Forms a bridge to the 50S subunit in the 70S ribosome, contacting the 23S rRNA.

One of the primary rRNA binding proteins, it binds directly to 16S rRNA where it helps nucleate assembly of the platform of the 30S subunit by binding and bridging several RNA helices of the 16S rRNA. In terms of biological role, forms an intersubunit bridge (bridge B4) with the 23S rRNA of the 50S subunit in the ribosome. This is Small ribosomal subunit protein uS15 from Leptospira interrogans serogroup Icterohaemorrhagiae serovar copenhageni (strain Fiocruz L1-130).